A 168-amino-acid chain; its full sequence is MSRSRINGNFLDKTFSIVANILLRIIPTTSGEKEAFTYYRDGMSAQSEGNYAEALQNYYEAMRLEIDPYDRSYILYNIGLIHTSNGEHMKALEYYFRALERNPFLPQAFNNMAVICHYRGEKAIQQGDSEIAEAWFDQAAEYWKQALALTPGNYIEAHNWLKITGRFD.

TPR repeat units lie at residues 35–68 (AFTY…EIDP), 72–105 (SYIL…NPFL), and 120–153 (GEKA…TPGN).

It belongs to the Ycf3 family.

It localises to the plastid membrane. Functionally, essential for the assembly of the photosystem I (PSI) complex. May act as a chaperone-like factor to guide the assembly of the PSI subunits. The chain is Photosystem I assembly protein Ycf3 from Cuscuta exaltata (Tall dodder).